The chain runs to 177 residues: Large ribosomal subunit protein uL6 (177 aa).

This sequence belongs to the universal ribosomal protein uL6 family. Part of the 50S ribosomal subunit.

Its function is as follows. This protein binds to the 23S rRNA, and is important in its secondary structure. It is located near the subunit interface in the base of the L7/L12 stalk, and near the tRNA binding site of the peptidyltransferase center. In Rickettsia felis (strain ATCC VR-1525 / URRWXCal2) (Rickettsia azadi), this protein is Large ribosomal subunit protein uL6.